Here is a 153-residue protein sequence, read N- to C-terminus: Aspartate carbamoyltransferase regulatory chain (153 aa).

Positions 109, 114, 138, and 141 each coordinate Zn(2+).

The protein belongs to the PyrI family. In terms of assembly, contains catalytic and regulatory chains. It depends on Zn(2+) as a cofactor.

In terms of biological role, involved in allosteric regulation of aspartate carbamoyltransferase. In Vibrio vulnificus (strain CMCP6), this protein is Aspartate carbamoyltransferase regulatory chain.